Consider the following 488-residue polypeptide: BRAP2 RING ZnF UBP domain-containing protein 1 (488 aa).

The segment at 174 to 214 adopts an RING-type; degenerate zinc-finger fold; it reads CPICLERLDPDTSGIVSTLCDHSFQCSCTSKWTYLSCQVCR. The segment at 208–301 adopts a UBP-type; degenerate zinc-finger fold; the sequence is LSCQVCRLCQ…GKSVEMSTSC (94 aa). Residues cysteine 225, cysteine 228, cysteine 237, cysteine 240, cysteine 245, histidine 252, histidine 256, and histidine 262 each coordinate Zn(2+). A coiled-coil region spans residues 370–418; it reads EQIVVNTMQELQNKIEKCEEEKSGITEVNTKLIKEQDTWRKKAKEIEER. Positions 453-488 are disordered; sequence MSSDTDGIREGTVLPVPISPEPVSSVRRQKKSNRRK. Positions 465 to 478 are enriched in low complexity; the sequence is VLPVPISPEPVSSV. Basic residues predominate over residues 479-488; it reads RRQKKSNRRK.

Component of the heteromeric E3 ligase complex made of BRIZ1 and BRIZ2. Forms heterooligomers with BRIZ2 via coiled-coil domains.

The enzyme catalyses S-ubiquitinyl-[E2 ubiquitin-conjugating enzyme]-L-cysteine + [acceptor protein]-L-lysine = [E2 ubiquitin-conjugating enzyme]-L-cysteine + N(6)-ubiquitinyl-[acceptor protein]-L-lysine.. It functions in the pathway protein modification; protein ubiquitination. Functionally, RING-type ubiquitin E3 ligase required for seed germination and post-germination growth. This Arabidopsis thaliana (Mouse-ear cress) protein is BRAP2 RING ZnF UBP domain-containing protein 1.